We begin with the raw amino-acid sequence, 156 residues long: Large ribosomal subunit protein uL15 (156 aa).

The segment at 25-48 is disordered; sequence RGIGCGKGKTSGRGHKGQKARSGV. Over residues 34–43 the composition is skewed to basic residues; sequence TSGRGHKGQK.

It belongs to the universal ribosomal protein uL15 family. As to quaternary structure, part of the 50S ribosomal subunit.

Binds to the 23S rRNA. This chain is Large ribosomal subunit protein uL15, found in Wolbachia pipientis subsp. Culex pipiens (strain wPip).